Here is a 382-residue protein sequence, read N- to C-terminus: Galactokinase (382 aa).

Position 34-37 (34-37 (EHTD)) interacts with substrate. Position 124–130 (124–130 (GAGLSSS)) interacts with ATP. Residues serine 130 and glutamate 162 each contribute to the Mg(2+) site. The active-site Proton acceptor is the aspartate 174. Residue tyrosine 223 coordinates substrate.

The protein belongs to the GHMP kinase family. GalK subfamily.

The protein resides in the cytoplasm. The catalysed reaction is alpha-D-galactose + ATP = alpha-D-galactose 1-phosphate + ADP + H(+). It functions in the pathway carbohydrate metabolism; galactose metabolism. In terms of biological role, catalyzes the transfer of the gamma-phosphate of ATP to D-galactose to form alpha-D-galactose-1-phosphate (Gal-1-P). The polypeptide is Galactokinase (Salmonella arizonae (strain ATCC BAA-731 / CDC346-86 / RSK2980)).